Here is a 495-residue protein sequence, read N- to C-terminus: ATP synthase subunit beta, chloroplastic (495 aa).

172 to 179 contacts ATP; sequence GGAGVGKT.

Belongs to the ATPase alpha/beta chains family. In terms of assembly, F-type ATPases have 2 components, CF(1) - the catalytic core - and CF(0) - the membrane proton channel. CF(1) has five subunits: alpha(3), beta(3), gamma(1), delta(1), epsilon(1). CF(0) has four main subunits: a(1), b(1), b'(1) and c(9-12).

It localises to the plastid. It is found in the chloroplast thylakoid membrane. It carries out the reaction ATP + H2O + 4 H(+)(in) = ADP + phosphate + 5 H(+)(out). Functionally, produces ATP from ADP in the presence of a proton gradient across the membrane. The catalytic sites are hosted primarily by the beta subunits. The sequence is that of ATP synthase subunit beta, chloroplastic from Pseudogaltonia clavata (Cape hyacinth).